The chain runs to 584 residues: MGQNQFRWSNEQLREHVEIIDGTRSPHKLLKNATYLNSYIREWMQANIWIYDDRIIYVGEKLPEQLHECEVIDCDGKYVVPSYIEPHAHPYQLYNPETLANHAMQFGTTTFINDNLTLFFTLKREESFHLLDEFTKIPASMYWWCRFDGQTELQNGESLFNSEEIIKWLQHEAVLQGGELTAWPKLLHGDDEMLTWVQETKRLQKKVEGHFPGASEATLAKLKLLGTDCDHEAMTGQEALARLMQGYTVSLRNSSIRPDLEVLLKELLELGVKQFDRFIFTTDGSHPSFYENGMTNIMIATAIKKGIPVIDAYQMASYNIARYYNMEHIHGAIATGRIANINILESKENPVPTSVIAKGQWVKRDGVNTHEALHIDWSKCKVTPLSLEWSIEKEDMLFSNKTGIHLLNNVITKPYTSEINIDCDELSIDYDECFLMMIARDGTWRVNTVVKGFAKEIGGLASSYSGTGDIILVGKRKEDMLTAFHRIKELGGGMVIAEKNEVLHEIALPLLGIMSELKMSELIQKEKKMVNLLQERGYVYNDPAFTILFFSATHLPFIRVTFIGLYDVKSGKVVASPVNLIKQY.

It belongs to the metallo-dependent hydrolases superfamily. Adenine deaminase family.

It carries out the reaction adenine + H2O + H(+) = hypoxanthine + NH4(+). This Bacillus anthracis protein is Putative adenine deaminase BA_3032/GBAA_3032/BAS2818.